The following is a 193-amino-acid chain: Ion-translocating oxidoreductase complex subunit A (193 aa).

Transmembrane regions (helical) follow at residues 5–25 (FLLF…FLGL), 39–59 (IGMG…SWLV), 62–82 (FILL…LVIA), 102–122 (LLGI…VALL), 134–154 (AIYG…FAAI), and 171–191 (SIGL…SGLV).

Belongs to the NqrDE/RnfAE family. In terms of assembly, the complex is composed of six subunits: RnfA, RnfB, RnfC, RnfD, RnfE and RnfG.

It localises to the cell inner membrane. Functionally, part of a membrane-bound complex that couples electron transfer with translocation of ions across the membrane. In Photorhabdus laumondii subsp. laumondii (strain DSM 15139 / CIP 105565 / TT01) (Photorhabdus luminescens subsp. laumondii), this protein is Ion-translocating oxidoreductase complex subunit A.